The primary structure comprises 895 residues: uncharacterized protein (895 aa).

A disordered region spans residues 257 to 283; the sequence is KSHKYPPGPPDNSSSNTSGQQNTSNTS. Positions 268–283 are enriched in low complexity; that stretch reads NSSSNTSGQQNTSNTS.

This is an uncharacterized protein from Acanthamoeba polyphaga mimivirus (APMV).